A 151-amino-acid chain; its full sequence is Cytochrome c-type biogenesis protein CcmE 2 (151 aa).

The Cytoplasmic segment spans residues 1-8 (MNPLRKKR). The chain crosses the membrane as a helical; Signal-anchor for type II membrane protein span at residues 9 to 29 (LVIILAILVGVGAAVGLALSA). The Periplasmic segment spans residues 30 to 151 (LQQNINLFYT…QSAPAPGKEG (122 aa)). 2 residues coordinate heme: His124 and Tyr128.

The protein belongs to the CcmE/CycJ family.

It is found in the cell inner membrane. Functionally, heme chaperone required for the biogenesis of c-type cytochromes. Transiently binds heme delivered by CcmC and transfers the heme to apo-cytochromes in a process facilitated by CcmF and CcmH. In Pseudomonas fluorescens (strain Pf0-1), this protein is Cytochrome c-type biogenesis protein CcmE 2.